The primary structure comprises 413 residues: Putative competence-damage inducible protein (413 aa).

The protein belongs to the CinA family.

In Pediococcus pentosaceus (strain ATCC 25745 / CCUG 21536 / LMG 10740 / 183-1w), this protein is Putative competence-damage inducible protein.